Consider the following 254-residue polypeptide: Imidazole glycerol phosphate synthase subunit HisF (254 aa).

Residues aspartate 12 and aspartate 131 contribute to the active site.

It belongs to the HisA/HisF family. In terms of assembly, heterodimer of HisH and HisF.

The protein localises to the cytoplasm. The enzyme catalyses 5-[(5-phospho-1-deoxy-D-ribulos-1-ylimino)methylamino]-1-(5-phospho-beta-D-ribosyl)imidazole-4-carboxamide + L-glutamine = D-erythro-1-(imidazol-4-yl)glycerol 3-phosphate + 5-amino-1-(5-phospho-beta-D-ribosyl)imidazole-4-carboxamide + L-glutamate + H(+). It functions in the pathway amino-acid biosynthesis; L-histidine biosynthesis; L-histidine from 5-phospho-alpha-D-ribose 1-diphosphate: step 5/9. IGPS catalyzes the conversion of PRFAR and glutamine to IGP, AICAR and glutamate. The HisF subunit catalyzes the cyclization activity that produces IGP and AICAR from PRFAR using the ammonia provided by the HisH subunit. This Corynebacterium aurimucosum (strain ATCC 700975 / DSM 44827 / CIP 107346 / CN-1) (Corynebacterium nigricans) protein is Imidazole glycerol phosphate synthase subunit HisF.